The following is a 545-amino-acid chain: CWF19-like protein 1 homolog (545 aa).

A disordered region spans residues 306–329 (YFYDMDGGRRKRQGGDNNKRDKRP).

Belongs to the CWF19 family.

This is CWF19-like protein 1 homolog from Drosophila melanogaster (Fruit fly).